A 266-amino-acid polypeptide reads, in one-letter code: Putative carbamate hydrolase RutD (266 aa).

The AB hydrolase-1 domain maps to 14-119 (PVVVLSAGLG…LVNGWLSLSP (106 aa)).

Belongs to the AB hydrolase superfamily. Hydrolase RutD family.

The catalysed reaction is carbamate + 2 H(+) = NH4(+) + CO2. In terms of biological role, involved in pyrimidine catabolism. May facilitate the hydrolysis of carbamate, a reaction that can also occur spontaneously. The polypeptide is Putative carbamate hydrolase RutD (Klebsiella pneumoniae subsp. pneumoniae (strain ATCC 700721 / MGH 78578)).